Reading from the N-terminus, the 235-residue chain is Thaumatin I (235 aa).

An N-terminal signal peptide occupies residues 1-22 (MAATTCFFFLFPFLLLLTLSRA). Cystine bridges form between C31-C226, C78-C88, C93-C99, C143-C215, C148-C199, C156-C167, C171-C180, and C181-C186. The propeptide at 230 to 235 (LELEDE) is removed in mature form.

The protein belongs to the thaumatin family.

The protein localises to the cytoplasmic vesicle. Its function is as follows. Taste-modifying protein; intensely sweet-tasting. It is 100000 times sweeter than sucrose on a molar basis. The sequence is that of Thaumatin I from Thaumatococcus daniellii (Katemfe).